A 449-amino-acid polypeptide reads, in one-letter code: F-box/LRR-repeat protein At3g60040 (449 aa).

The region spanning 12 to 64 (RDAISWLPDEVLGKILSLIPTKQAVSTSLLAKKWRTIFRLVDHLELDDSFSLQ) is the F-box domain. 6 LRR repeats span residues 161–188 (LTLGTQLCLGQLPSYVSLPSLKSLFIDT), 191–215 (FYDIEDLCCVLLAGCPVLEELSVHH), 216–237 (HDFIATPHTISSPTLKRLSVDY), 239–263 (CPDDVDSASHMSFDLPKLVYLEYSH), 287–312 (ERKVLRMDVTDLIIGIRNVQSLHLSP), and 340–365 (KNKRGWRLLANLLKQSTKLETLIVKD).

The protein is F-box/LRR-repeat protein At3g60040 of Arabidopsis thaliana (Mouse-ear cress).